The following is a 117-amino-acid chain: uncharacterized protein (117 aa).

A helical membrane pass occupies residues 57–77 (LGFPLGLLVFLHSLIVARFFV).

The protein localises to the membrane. This is an uncharacterized protein from Schizosaccharomyces pombe (strain 972 / ATCC 24843) (Fission yeast).